Reading from the N-terminus, the 1063-residue chain is Integrin alpha-8 (1063 aa).

The N-terminal stretch at M1 to A38 is a signal peptide. The Extracellular segment spans residues F39 to L1012. 7 FG-GAP repeats span residues E44–Q105, N122–E183, R188–Y240, K253–M306, T307–R372, D373–T431, and Q435–M498. N81 is a glycosylation site (N-linked (GlcNAc...) asparagine). C96 and C106 are oxidised to a cystine. N122 is a glycosylation site (N-linked (GlcNAc...) asparagine). C150 and C171 are disulfide-bonded. A glycan (N-linked (GlcNAc...) asparagine) is linked at N177. A disulfide bond links C187 and C200. A glycan (N-linked (GlcNAc...) asparagine) is linked at N239. Ca(2+)-binding residues include E275, T277, D279, and E283. N302 and N311 each carry an N-linked (GlcNAc...) asparagine glycan. Residues D329, N331, D333, L335, D337, D395, N397, D399, Y401, and D403 each coordinate Ca(2+). The Cell attachment site signature appears at R455–D457. Residues D459, D461, N463, Y465, and D467 each coordinate Ca(2+). Residue N504 is glycosylated (N-linked (GlcNAc...) asparagine). Intrachain disulfides connect C507-C518 and C524-C580. 2 N-linked (GlcNAc...) asparagine glycosylation sites follow: N601 and N605. Cystine bridges form between C641-C647 and C713-C726. Residues N719, N737, N753, N780, N896, and N923 are each glycosylated (N-linked (GlcNAc...) asparagine). Cystine bridges form between C867/C924 and C929/C934. N1005 is a glycosylation site (N-linked (GlcNAc...) asparagine). The chain crosses the membrane as a helical span at residues W1013–L1033. At W1034 to A1063 the chain is on the cytoplasmic side.

This sequence belongs to the integrin alpha chain family. As to quaternary structure, heterodimer of an alpha and a beta subunit. The alpha subunit is composed of a heavy and a light chain linked by a disulfide bond. Alpha-8 associates with beta-1. In terms of tissue distribution, expressed in mesenchymal cells, including alveolar myofibroblasts, kidney mesangial cells and hepatic stellar cells and vascular and visceral smooth muscle (at protein level).

It localises to the membrane. It is found in the cell membrane. In terms of biological role, integrin alpha-8/beta-1 functions in the genesis of kidney and probably of other organs by regulating the recruitment of mesenchymal cells into epithelial structures. It recognizes the sequence R-G-D in a wide array of ligands including TNC, FN1, SPP1 TGFB1, TGFB3 and VTN. NPNT is probably its functional ligand in kidney genesis. Neuronal receptor for TNC it mediates cell-cell interactions and regulates neurite outgrowth of sensory and motor neurons. The sequence is that of Integrin alpha-8 (ITGA8) from Homo sapiens (Human).